A 246-amino-acid chain; its full sequence is ATP synthase subunit a, chloroplastic (246 aa).

5 consecutive transmembrane segments (helical) span residues 33–53 (VHGQ…GFGL), 99–119 (TIFL…WALI), 133–153 (INTT…AGIN), 201–221 (GVLV…LGLF), and 222–242 (TSAI…GESL).

Belongs to the ATPase A chain family. F-type ATPases have 2 components, CF(1) - the catalytic core - and CF(0) - the membrane proton channel. CF(1) has five subunits: alpha(3), beta(3), gamma(1), delta(1), epsilon(1). CF(0) has four main subunits: a, b, b' and c.

The protein localises to the plastid. It localises to the chloroplast thylakoid membrane. Key component of the proton channel; it plays a direct role in the translocation of protons across the membrane. The polypeptide is ATP synthase subunit a, chloroplastic (Oltmannsiellopsis viridis (Marine flagellate)).